The following is a 310-amino-acid chain: tRNA dimethylallyltransferase (310 aa).

Residue 14–21 (GPTASGKT) coordinates ATP. 16 to 21 (TASGKT) is a substrate binding site. 3 interaction with substrate tRNA regions span residues 39-42 (DSAL), 163-167 (QRLSR), and 244-249 (RCVGYR).

The protein belongs to the IPP transferase family. In terms of assembly, monomer. Mg(2+) serves as cofactor.

The enzyme catalyses adenosine(37) in tRNA + dimethylallyl diphosphate = N(6)-dimethylallyladenosine(37) in tRNA + diphosphate. Its function is as follows. Catalyzes the transfer of a dimethylallyl group onto the adenine at position 37 in tRNAs that read codons beginning with uridine, leading to the formation of N6-(dimethylallyl)adenosine (i(6)A). The polypeptide is tRNA dimethylallyltransferase (Aeromonas salmonicida (strain A449)).